The sequence spans 118 residues: Large ribosomal subunit protein bL20 (118 aa).

It belongs to the bacterial ribosomal protein bL20 family.

Its function is as follows. Binds directly to 23S ribosomal RNA and is necessary for the in vitro assembly process of the 50S ribosomal subunit. It is not involved in the protein synthesizing functions of that subunit. The protein is Large ribosomal subunit protein bL20 of Pseudomonas fluorescens (strain SBW25).